A 160-amino-acid chain; its full sequence is Epithelial membrane protein 1 (160 aa).

The chain crosses the membrane as a helical span at residues 1–21; the sequence is MLVLLAAIFVVHIATCVMLFV. N35 and N43 each carry an N-linked (GlcNAc...) asparagine glycan. A run of 3 helical transmembrane segments spans residues 67–87, 95–115, and 137–157; these read FMIL…FQLF, FFLS…GASI, and FILA…YLVL.

It belongs to the PMP-22/EMP/MP20 family. As to expression, most abundant in squamous epithelia.

The protein localises to the membrane. This chain is Epithelial membrane protein 1 (EMP1), found in Oryctolagus cuniculus (Rabbit).